The chain runs to 238 residues: Protein TIFY 3A (238 aa).

The 36-residue stretch at 39 to 74 folds into the Tify 1 domain; it reads EPDASTQLTIIFGGSCRVFNGVPAQKVQEIIRIAFA. The Jas 1 signature appears at 101–120; it reads PIARRRSLQRFLEKRRDRST. The Nuclear localization signal 1 signature appears at 103–110; that stretch reads ARRRSLQR. The Tify 2 domain maps to 125–160; that stretch reads SMILPSQLTIIFGGSFSVFDGIPAEKVQEILHIAAA. Positions 197-222 match the Jas 2 motif; it reads PIARRRSLQRFFEKRRHRFVHTKPYS. Residues 199–206 carry the Nuclear localization signal 2 motif; it reads ARRRSLQR. The interval 219–238 is disordered; it reads KPYSATTSEADKNETSPIVT.

The protein belongs to the TIFY/JAZ family. As to quaternary structure, interacts with MYC2, MYB21, MYB24, AFPH2/NINJA, TIFY10A/JAZ1, TIFY10B/JAZ2, TIFY6B/JAZ3, TIFY6A/JAZ4, TIFY7/JAZ9 and TIFY9/JAZ10. Post-translationally, ubiquitinated. Targeted for degradation by the SCF(COI1) E3 ubiquitin ligase-proteasome pathway during jasmonate signaling.

It is found in the nucleus. Functionally, repressor of jasmonate (JA) responses. Targets MYC2, MYC3 and MYC4 that are JA-dependent transcription activators. This Arabidopsis thaliana (Mouse-ear cress) protein is Protein TIFY 3A (TIFY3A).